The primary structure comprises 370 residues: Pyruvate dehydrogenase E1 component subunit alpha (370 aa).

Heterodimer of an alpha and a beta chain. Requires thiamine diphosphate as cofactor.

The catalysed reaction is N(6)-[(R)-lipoyl]-L-lysyl-[protein] + pyruvate + H(+) = N(6)-[(R)-S(8)-acetyldihydrolipoyl]-L-lysyl-[protein] + CO2. Its function is as follows. The pyruvate dehydrogenase complex catalyzes the overall conversion of pyruvate to acetyl-CoA and CO(2). It contains multiple copies of three enzymatic components: pyruvate dehydrogenase (E1), dihydrolipoamide acetyltransferase (E2) and lipoamide dehydrogenase (E3). This is Pyruvate dehydrogenase E1 component subunit alpha (pdhA) from Staphylococcus epidermidis (strain ATCC 35984 / DSM 28319 / BCRC 17069 / CCUG 31568 / BM 3577 / RP62A).